A 432-amino-acid chain; its full sequence is Ribulose bisphosphate carboxylase-like protein 2 (432 aa).

Mg(2+) is bound by residues Lys198, Asp200, and Glu201. At Lys198 the chain carries N6-carboxylysine.

This sequence belongs to the RuBisCO large chain family. Type IV subfamily. As to quaternary structure, homodimer. Mg(2+) is required as a cofactor.

Functionally, may be involved in sulfur metabolism and oxidative stress response. Does not show RuBisCO activity. The protein is Ribulose bisphosphate carboxylase-like protein 2 (rlp2) of Rhodopseudomonas palustris (strain ATCC BAA-98 / CGA009).